The chain runs to 514 residues: Na(+)/H(+) antiporter NhaB (514 aa).

A run of 12 helical transmembrane segments spans residues 23–43, 63–83, 97–117, 120–140, 144–164, 202–222, 238–258, 303–323, 357–377, 391–411, 447–467, and 475–495; these read LALLVFLIINPFIFLANPFIA, PLLPGGLLAIEAVIIGMTSAA, LLLMFMVAGIYFMKQLLLFIF, LLLSIRSKMVLSLAFCVAAAF, FLDALTVVAVVISVAVGFYGI, LMMHAGVGTALGGVMTMVGEP, FFLRMSPVTVPVLVCGLLTCM, AIIGVWLVTALALHLAEVGLI, LTVFFSIVAVIIDQHLFAPII, LFYLFNGLLSSISDNVFVGTI, ATPNGQAAFLFLLTSALAPLI, and VWMALPYTIVLTLIGLLCVEF.

It belongs to the NhaB Na(+)/H(+) (TC 2.A.34) antiporter family.

It localises to the cell inner membrane. The enzyme catalyses 2 Na(+)(in) + 3 H(+)(out) = 2 Na(+)(out) + 3 H(+)(in). Na(+)/H(+) antiporter that extrudes sodium in exchange for external protons. In Salmonella paratyphi B (strain ATCC BAA-1250 / SPB7), this protein is Na(+)/H(+) antiporter NhaB.